Consider the following 501-residue polypeptide: Carotenoid cleavage oxygenase (501 aa).

Positions 162, 211, 314, and 494 each coordinate Fe cation.

Belongs to the carotenoid oxygenase family. Requires Fe(2+) as cofactor.

Catalyzes the oxidative cleavage of several carotenoids and apocarotenoids in vitro. The polypeptide is Carotenoid cleavage oxygenase (Mycobacterium tuberculosis (strain CDC 1551 / Oshkosh)).